Reading from the N-terminus, the 355-residue chain is Elongation factor Ts (355 aa).

Residues 82 to 85 (TDFV) are involved in Mg(2+) ion dislocation from EF-Tu.

The protein belongs to the EF-Ts family.

It is found in the cytoplasm. In terms of biological role, associates with the EF-Tu.GDP complex and induces the exchange of GDP to GTP. It remains bound to the aminoacyl-tRNA.EF-Tu.GTP complex up to the GTP hydrolysis stage on the ribosome. This chain is Elongation factor Ts, found in Helicobacter pylori (strain Shi470).